A 469-amino-acid polypeptide reads, in one-letter code: Glutamate--tRNA ligase (469 aa).

The 'HIGH' region signature appears at 9 to 19 (PSPTGFLHVGG). 4 residues coordinate Zn(2+): C98, C100, C125, and D127. The 'KMSKS' region motif lies at 236-240 (KLSKR). Residue K239 coordinates ATP.

This sequence belongs to the class-I aminoacyl-tRNA synthetase family. Glutamate--tRNA ligase type 1 subfamily. In terms of assembly, monomer. The cofactor is Zn(2+).

The protein resides in the cytoplasm. The enzyme catalyses tRNA(Glu) + L-glutamate + ATP = L-glutamyl-tRNA(Glu) + AMP + diphosphate. Its function is as follows. Catalyzes the attachment of glutamate to tRNA(Glu) in a two-step reaction: glutamate is first activated by ATP to form Glu-AMP and then transferred to the acceptor end of tRNA(Glu). The polypeptide is Glutamate--tRNA ligase (Shewanella halifaxensis (strain HAW-EB4)).